The sequence spans 192 residues: Holliday junction branch migration complex subunit RuvA (192 aa).

The segment at Met-1–Leu-64 is domain I. Residues Thr-65–Ala-143 are domain II. Positions Val-144–Gln-149 are flexible linker. Positions Gln-149–Val-192 are domain III.

It belongs to the RuvA family. As to quaternary structure, homotetramer. Forms an RuvA(8)-RuvB(12)-Holliday junction (HJ) complex. HJ DNA is sandwiched between 2 RuvA tetramers; dsDNA enters through RuvA and exits via RuvB. An RuvB hexamer assembles on each DNA strand where it exits the tetramer. Each RuvB hexamer is contacted by two RuvA subunits (via domain III) on 2 adjacent RuvB subunits; this complex drives branch migration. In the full resolvosome a probable DNA-RuvA(4)-RuvB(12)-RuvC(2) complex forms which resolves the HJ.

It localises to the cytoplasm. In terms of biological role, the RuvA-RuvB-RuvC complex processes Holliday junction (HJ) DNA during genetic recombination and DNA repair, while the RuvA-RuvB complex plays an important role in the rescue of blocked DNA replication forks via replication fork reversal (RFR). RuvA specifically binds to HJ cruciform DNA, conferring on it an open structure. The RuvB hexamer acts as an ATP-dependent pump, pulling dsDNA into and through the RuvAB complex. HJ branch migration allows RuvC to scan DNA until it finds its consensus sequence, where it cleaves and resolves the cruciform DNA. This Dechloromonas aromatica (strain RCB) protein is Holliday junction branch migration complex subunit RuvA.